Reading from the N-terminus, the 225-residue chain is Probable 3-keto-L-gulonate-6-phosphate decarboxylase (225 aa).

Aspartate 11 is a substrate binding site. Residues glutamate 33 and aspartate 62 each contribute to the Mg(2+) site. Arginine 202 is a binding site for substrate.

It belongs to the HPS/KGPDC family. KGPDC subfamily. Homodimer. It depends on Mg(2+) as a cofactor.

It catalyses the reaction 3-dehydro-L-gulonate 6-phosphate + H(+) = L-xylulose 5-phosphate + CO2. Its function is as follows. Catalyzes the decarboxylation of 3-keto-L-gulonate-6-P into L-xylulose-5-P. This chain is Probable 3-keto-L-gulonate-6-phosphate decarboxylase (sgbH), found in Haemophilus influenzae (strain ATCC 51907 / DSM 11121 / KW20 / Rd).